The sequence spans 430 residues: T-kininogen 2 (430 aa).

An N-terminal signal peptide occupies residues 1–18; the sequence is MKLITILLLCSRLLPSLA. Pyrrolidone carboxylic acid is present on glutamine 19. The 104-residue stretch at 28 to 131 folds into the Cystatin kininogen-type 1 domain; the sequence is CNDETVFQAV…TQICNITPGK (104 aa). Intrachain disulfides connect cysteine 28/cysteine 404, cysteine 83/cysteine 94, cysteine 107/cysteine 125, cysteine 141/cysteine 144, cysteine 205/cysteine 217, cysteine 228/cysteine 247, cysteine 263/cysteine 266, cysteine 327/cysteine 339, and cysteine 350/cysteine 369. A glycan (N-linked (GlcNAc...) asparagine) is linked at asparagine 82. The region spanning 150–253 is the Cystatin kininogen-type 2 domain; that stretch reads MDSSDLKPVL…SQSCDLYPGD (104 aa). Asparagine 168 and asparagine 204 each carry an N-linked (GlcNAc...) asparagine glycan. The Cystatin kininogen-type 3 domain maps to 272–375; the sequence is VDSPELKEAL…TVRCQALDMM (104 aa). Residue asparagine 326 is glycosylated (N-linked (GlcNAc...) asparagine). A disordered region spans residues 410-430; the sequence is LSKAGAGPAPDHQAEASTVTP.

As T-kinin is preceded by a Met instead of an Arg or Lys, it is not released from its precursor by either tissue or plasma kallikrein. As to expression, plasma.

The protein resides in the secreted. Its subcellular location is the extracellular space. Its function is as follows. Kininogens are plasma glycoproteins with a number of functions: (1) as precursor of the active peptide bradykinin they effect smooth muscle contraction, induction of hypotension and increase of vascular permeability. (2) They play a role in blood coagulation by helping to position optimally prekallikrein and factor XI next to factor XII. (3) They are inhibitor of thiol proteases. This is T-kininogen 2 from Rattus norvegicus (Rat).